The sequence spans 400 residues: Large envelope protein (400 aa).

Met-1 is subject to N-acetylmethionine. Gly-2 carries N-myristoyl glycine; by host lipidation. A pre-S1 region spans residues 2 to 119 (GAPLSTTRRG…PPLRDTHPQA (118 aa)). The segment at 2 to 174 (GAPLSTTRRG…FSKTGGPAMN (173 aa)) is pre-S. Topologically, residues 2 to 181 (GAPLSTTRRG…AMNMDSITSG (180 aa)) are virion surface; in external conformation. The Intravirion; in internal conformation portion of the chain corresponds to 2–253 (GAPLSTTRRG…PGYRWMCLRR (252 aa)). A glycan (N-linked (GlcNAc...) asparagine) is linked at Pro-4. The interval 84 to 114 (VLTTLPADPPPASTNRRSGRKPTPVSPPLRD) is disordered. The interval 120-174 (MQWNSTQFHQALLDPRVRALYFPAGGSSSETQNPAPTIASLTSSIFSKTGGPAMN) is pre-S2. The chain crosses the membrane as a helical span at residues 182–202 (LLGPLLVLQAVCFLLTKILTI). At 203-253 (PQSLDSWWTSLNFLGGLPGCPGQNSQSPTSNHLPTSCPPTCPGYRWMCLRR) the chain is on the intravirion; in external conformation side. A helical membrane pass occupies residues 254-274 (FIIFLFILLLCLIFLLVLLDY). Residues 275–348 (QGMLPVCPLI…WASARFSWLS (74 aa)) are Virion surface-facing. A glycan (N-linked (GlcNAc...) asparagine; by host) is linked at Asn-320. A helical membrane pass occupies residues 349 to 369 (LLVQFVQWCVGLSPTVWLLVI). Topologically, residues 370–375 (WMIWYW) are intravirion. The chain crosses the membrane as a helical span at residues 376–398 (GPNLCSILSPFIPLLPIFCYLWV). The Virion surface portion of the chain corresponds to 399 to 400 (SI).

It belongs to the orthohepadnavirus major surface antigen family. In terms of assembly, in its internal form (Li-HBsAg), interacts with the capsid protein and with the isoform S. Interacts with host chaperone CANX. Associates with host chaperone CANX through its pre-S2 N glycan; this association may be essential for isoform M proper secretion. As to quaternary structure, interacts with isoform L. Interacts with the antigens of satellite virus HDV (HDVAgs); this interaction is required for encapsidation of HDV genomic RNA. In terms of processing, isoform M is N-terminally acetylated by host at a ratio of 90%, and N-glycosylated by host at the pre-S2 region. Myristoylated.

Its subcellular location is the virion membrane. The large envelope protein exists in two topological conformations, one which is termed 'external' or Le-HBsAg and the other 'internal' or Li-HBsAg. In its external conformation the protein attaches the virus to cell receptors and thereby initiating infection. This interaction determines the species specificity and liver tropism. This attachment induces virion internalization predominantly through caveolin-mediated endocytosis. The large envelope protein also assures fusion between virion membrane and endosomal membrane. In its internal conformation the protein plays a role in virion morphogenesis and mediates the contact with the nucleocapsid like a matrix protein. Its function is as follows. The middle envelope protein plays an important role in the budding of the virion. It is involved in the induction of budding in a nucleocapsid independent way. In this process the majority of envelope proteins bud to form subviral lipoprotein particles of 22 nm of diameter that do not contain a nucleocapsid. The chain is Large envelope protein from Homo sapiens (Human).